Reading from the N-terminus, the 133-residue chain is UPF0047 protein Rv2556c (133 aa).

It belongs to the UPF0047 family.

The protein is UPF0047 protein Rv2556c of Mycobacterium tuberculosis (strain ATCC 25618 / H37Rv).